Here is a 258-residue protein sequence, read N- to C-terminus: MTAPPRIAFLASPAEPAVAARARLVQRFGDHALDCADIVCALGGDGFMLQTLHRHGASNKPVFGMKLGSVGFLMNQYRDDEDDLLERLQRAEPAYLRPLEMQVQTESGASAGSLAYNEVSLLRQTRQAAHLSIDLNGQTRIAELIGDGVMVATPAGSTAYNYSAHGPILPLGSHTLALTPIAPYRPRRWRGAILKADTAVRFRVLDPYKRPVSVTADSHEIRDVVEVTIRESTQRQVTLLFDPEHNLEERIFSEQFAV.

Asp45 acts as the Proton acceptor in catalysis. Residues 45–46 (DG), 117–118 (NE), Asp147, Ala155, 158–163 (TAYNYS), and Ala182 contribute to the NAD(+) site.

The protein belongs to the NAD kinase family. Requires a divalent metal cation as cofactor.

The protein localises to the cytoplasm. The enzyme catalyses NAD(+) + ATP = ADP + NADP(+) + H(+). Functionally, involved in the regulation of the intracellular balance of NAD and NADP, and is a key enzyme in the biosynthesis of NADP. Catalyzes specifically the phosphorylation on 2'-hydroxyl of the adenosine moiety of NAD to yield NADP. The sequence is that of NAD kinase from Xanthomonas oryzae pv. oryzae (strain MAFF 311018).